Here is a 179-residue protein sequence, read N- to C-terminus: Natural killer cells antigen CD94 (179 aa).

At 1 to 10 (MAVSRITRWR) the chain is on the cytoplasmic side. A helical; Signal-anchor for type II membrane protein transmembrane segment spans residues 11 to 31 (LMSVIFGIKCLFLMVTLGVLL). Topologically, residues 32–179 (INSFTIQNIQ…NRYICKKLPI (148 aa)) are extracellular. 4 disulfides stabilise this stretch: cysteine 58–cysteine 70, cysteine 61–cysteine 72, cysteine 89–cysteine 174, and cysteine 152–cysteine 166. Positions 68 to 175 (HQCNCYFISK…CENKNRYICK (108 aa)) constitute a C-type lectin domain. Asparagine 93 and asparagine 109 each carry an N-linked (GlcNAc...) asparagine glycan.

Can form disulfide-bonded heterodimer with NKG2 family members KLRC1 and KLRC2. KLRD1-KLRC1 heterodimer interacts with peptide-bound MHC-E-B2M heterotrimeric complex. KLRD1 plays a prominent role in directly interacting with MHC-E. KLRD1-KLRC1 interacts with much higher affinity with peptide-bound MHC-E-B2M than KLRD1-KLRC2. Interacts with the adapter protein TYROBP/DAP12; this interaction is required for cell surface expression and cell activation.

It localises to the cell membrane. Functionally, immune receptor involved in self-nonself discrimination. In complex with KLRC1 or KLRC2 on cytotoxic and regulatory lymphocyte subsets, recognizes non-classical major histocompatibility (MHC) class Ib molecule MHC-E loaded with self-peptides derived from the signal sequence of classical MHC class Ia and non-classical MHC class Ib molecules. Enables cytotoxic cells to monitor the expression of MHC class I molecules in healthy cells and to tolerate self. Primarily functions as a ligand binding subunit as it lacks the capacity to signal. In terms of biological role, KLRD1-KLRC1 acts as an immune inhibitory receptor. Key inhibitory receptor on natural killer (NK) cells that regulates their activation and effector functions. Dominantly counteracts T cell receptor signaling on a subset of memory/effector CD8-positive T cells as part of an antigen-driven response to avoid autoimmunity. On intraepithelial CD8-positive gamma-delta regulatory T cells triggers TGFB1 secretion, which in turn limits the cytotoxic programming of intraepithelial CD8-positive alpha-beta T cells, distinguishing harmless from pathogenic antigens. In MHC-E-rich tumor microenvironment, acts as an immune inhibitory checkpoint and may contribute to progressive loss of effector functions of NK cells and tumor-specific T cells, a state known as cell exhaustion. Upon MHC-E-peptide binding, transmits intracellular signals through KLRC1 immunoreceptor tyrosine-based inhibition motifs (ITIMs) by recruiting INPP5D/SHIP-1 and INPPL1/SHIP-2 tyrosine phosphatases to ITIMs, and ultimately opposing signals transmitted by activating receptors through dephosphorylation of proximal signaling molecules. KLRD1-KLRC2 acts as an immune activating receptor. On cytotoxic lymphocyte subsets recognizes MHC-E loaded with signal sequence-derived peptides from non-classical MHC class Ib MHC-G molecules, likely playing a role in the generation and effector functions of adaptive NK cells and in maternal-fetal tolerance during pregnancy. Regulates the effector functions of terminally differentiated cytotoxic lymphocyte subsets, and in particular may play a role in adaptive NK cell response to viral infection. Upon MHC-E-peptide binding, transmits intracellular signals via the adapter protein TYROBP/DAP12, triggering the phosphorylation of proximal signaling molecules and cell activation. This Mus musculus (Mouse) protein is Natural killer cells antigen CD94 (Klrd1).